Consider the following 405-residue polypeptide: Nicotinate phosphoribosyltransferase (405 aa).

His230 carries the post-translational modification Phosphohistidine; by autocatalysis.

This sequence belongs to the NAPRTase family. In terms of processing, transiently phosphorylated on a His residue during the reaction cycle. Phosphorylation strongly increases the affinity for substrates and increases the rate of nicotinate D-ribonucleotide production. Dephosphorylation regenerates the low-affinity form of the enzyme, leading to product release.

The enzyme catalyses nicotinate + 5-phospho-alpha-D-ribose 1-diphosphate + ATP + H2O = nicotinate beta-D-ribonucleotide + ADP + phosphate + diphosphate. Its pathway is cofactor biosynthesis; NAD(+) biosynthesis; nicotinate D-ribonucleotide from nicotinate: step 1/1. Its function is as follows. Catalyzes the synthesis of beta-nicotinate D-ribonucleotide from nicotinate and 5-phospho-D-ribose 1-phosphate at the expense of ATP. This chain is Nicotinate phosphoribosyltransferase, found in Bordetella pertussis (strain Tohama I / ATCC BAA-589 / NCTC 13251).